The following is a 674-amino-acid chain: Sodium/hydrogen exchanger 1 (674 aa).

The signal sequence occupies residues 1–24 (MKLNKSYILIVVLLLSLFYSSVSS). Residues 31–65 (KSNNHYNSDNSNNDNKNININNNNDGDGDDDDDNN) form a disordered region. Residues 37-55 (NSDNSNNDNKNININNNND) are compositionally biased toward low complexity. 12 helical membrane passes run 120–140 (TIIF…YFII), 144–164 (IPFV…GIVF), 175–195 (VVSF…IFET), 213–233 (MFAV…IYIV), 275–297 (LYIL…YSVV), 314–334 (VVAI…SLIL), 336–356 (WINI…FSYM), 359–379 (VLAG…GITL), 401–421 (TAAF…LTAH), 432–452 (WSIL…CFLL), 460–480 (IPWV…FAFS), and 499–519 (NTLL…YPLL). The interval 591-674 (HELDSNPLRF…NKNNDTLPLI (84 aa)) is disordered. Positions 601 to 618 (DDDEEDDDDEDLDFDSDL) are enriched in acidic residues. A compositionally biased stretch (low complexity) spans 627–657 (DSIHQSDNNNNDNGNNNNNNNNIIINNNSQH). Polar residues predominate over residues 662–674 (GSNNKNNDTLPLI).

It belongs to the monovalent cation:proton antiporter 1 (CPA1) transporter (TC 2.A.36) family.

Its subcellular location is the membrane. With respect to regulation, LY294002, an inhibitor of the catalytic subunit of PI3-kinase, blocks NHE1-dependent (but not NHE1-independent) increase in intracellular pH in response to cAMP. Its function is as follows. Regulation of intracellular pH homeostasis in response to cAMP, which is essential for chemotaxis. Necessary for F-actin localization and the kinetics of actin polymerization during chemotaxis and cell polarity but not for directional sensing. The chain is Sodium/hydrogen exchanger 1 (nhe1) from Dictyostelium discoideum (Social amoeba).